Reading from the N-terminus, the 306-residue chain is Ribonuclease Z (306 aa).

Zn(2+) is bound by residues H63, H65, D67, H68, H141, D211, and H269. D67 serves as the catalytic Proton acceptor.

This sequence belongs to the RNase Z family. As to quaternary structure, homodimer. Requires Zn(2+) as cofactor.

It catalyses the reaction Endonucleolytic cleavage of RNA, removing extra 3' nucleotides from tRNA precursor, generating 3' termini of tRNAs. A 3'-hydroxy group is left at the tRNA terminus and a 5'-phosphoryl group is left at the trailer molecule.. Its function is as follows. Zinc phosphodiesterase, which displays some tRNA 3'-processing endonuclease activity. Probably involved in tRNA maturation, by removing a 3'-trailer from precursor tRNA. The polypeptide is Ribonuclease Z (Staphylococcus haemolyticus (strain JCSC1435)).